A 434-amino-acid chain; its full sequence is Histidinol dehydrogenase (434 aa).

Positions 130, 188, and 211 each coordinate NAD(+). The substrate site is built by Ser237, Gln259, and His262. Zn(2+) contacts are provided by Gln259 and His262. Residues Glu326 and His327 each act as proton acceptor in the active site. The substrate site is built by His327, Asp360, Glu414, and His419. Residue Asp360 participates in Zn(2+) binding. His419 contributes to the Zn(2+) binding site.

This sequence belongs to the histidinol dehydrogenase family. As to quaternary structure, homodimer. Zn(2+) serves as cofactor.

The enzyme catalyses L-histidinol + 2 NAD(+) + H2O = L-histidine + 2 NADH + 3 H(+). Its pathway is amino-acid biosynthesis; L-histidine biosynthesis; L-histidine from 5-phospho-alpha-D-ribose 1-diphosphate: step 9/9. Its function is as follows. Catalyzes the sequential NAD-dependent oxidations of L-histidinol to L-histidinaldehyde and then to L-histidine. The protein is Histidinol dehydrogenase of Shigella flexneri.